The following is an 898-amino-acid chain: Phosphoenolpyruvate carboxylase (898 aa).

Residues His-134 and Lys-564 contribute to the active site.

Belongs to the PEPCase type 1 family. It depends on Mg(2+) as a cofactor.

The enzyme catalyses oxaloacetate + phosphate = phosphoenolpyruvate + hydrogencarbonate. Its function is as follows. Forms oxaloacetate, a four-carbon dicarboxylic acid source for the tricarboxylic acid cycle. The sequence is that of Phosphoenolpyruvate carboxylase from Chromobacterium violaceum (strain ATCC 12472 / DSM 30191 / JCM 1249 / CCUG 213 / NBRC 12614 / NCIMB 9131 / NCTC 9757 / MK).